We begin with the raw amino-acid sequence, 663 residues long: RING finger protein 145 (663 aa).

The next 14 membrane-spanning stretches (helical) occupy residues 53-73 (YLALNMHYVGYILSVVLLTLP), 77-97 (LVQLYLYFLTALLLYAGHQIS), 123-143 (FTTALIGQLVVCTLCSCVMKT), 146-166 (IWLFSAHMLPLLARLCLVPLE), 168-188 (IVIINKFAMIFTGLEVLYFLG), 205-222 (LVQVVEVYGLLALGMSLW), 225-245 (LVVPVLFMVFWLVLFALQIYS), 275-295 (YSLLGLVFTVSFVALGVLTLC), 316-336 (TEGVTLLILAVQTGLIELQVV), 340-360 (FLLSIILFIVVASILQSMLEI), 384-404 (SLCLFLLVFPAYMAYMICQFF), 410-430 (LLIIISSSILTSLQVLGTLFI), 460-480 (LLEFLVALCVVAYGVSETIFG), and 482-502 (WTVMGSMIIFIHSYYNVWLRA). Positions 81–84 (YLYF) match the YLYF motif motif. Residue cysteine 537 is part of the active site. The RING-type; atypical zinc finger occupies 537–575 (CAICYQDMKSAVITPCSHFFHAGCLKKWLYVQETCPLCH). The interval 607-663 (EGTEPPGQEHTPGTRIQEGSRDNNEYIARRPDNQEGAFDPKEYPHSAKDEAHPVESA) is disordered. The span at 624-663 (EGSRDNNEYIARRPDNQEGAFDPKEYPHSAKDEAHPVESA) shows a compositional bias: basic and acidic residues.

Interacts (via YLYF motif) with INSIG1 and INSIG2.

It localises to the endoplasmic reticulum membrane. The catalysed reaction is S-ubiquitinyl-[E2 ubiquitin-conjugating enzyme]-L-cysteine + [acceptor protein]-L-lysine = [E2 ubiquitin-conjugating enzyme]-L-cysteine + N(6)-ubiquitinyl-[acceptor protein]-L-lysine.. Its function is as follows. E3 ubiquitin ligase that catalyzes the direct transfer of ubiquitin from E2 ubiquitin-conjugating enzyme to a specific substrate. In response to bacterial infection, negatively regulates the phagocyte oxidative burst by controlling the turnover of the NADPH oxidase complex subunits. Promotes monoubiquitination of CYBA and 'Lys-48'-linked polyubiquitination and degradation of CYBB NADPH oxidase catalytic subunits, both essential for the generation of antimicrobial reactive oxygen species. Involved in the maintenance of cholesterol homeostasis. In response to high sterol concentrations ubiquitinates HMGCR, a rate-limiting enzyme in cholesterol biosynthesis, and targets it for degradation. The interaction with INSIG1 is required for this function. In addition, triggers ubiquitination of SCAP, likely inhibiting its transport to the Golgi apparatus and the subsequent processing/maturation of SREBPF2, ultimately down-regulating cholesterol biosynthesis. The chain is RING finger protein 145 from Homo sapiens (Human).